Consider the following 196-residue polypeptide: UMP-CMP kinase (196 aa).

13–18 (GAGKGT) lines the ATP pocket. Ser-33 is subject to Phosphoserine. The tract at residues 33–63 (SAGELLRDERKNPDSQYGELIEKYIKEGKIV) is NMP. Residue Arg-39 coordinates a ribonucleoside 5'-phosphate. N6-acetyllysine is present on residues Lys-43 and Lys-55. Residue 61 to 63 (KIV) coordinates a ribonucleoside 5'-phosphate. A Glycyl lysine isopeptide (Lys-Gly) (interchain with G-Cter in SUMO2) cross-link involves residue Lys-73. Residue 93–96 (GFPR) coordinates a ribonucleoside 5'-phosphate. Asn-100 contacts CMP. The residue at position 106 (Lys-106) is an N6-succinyllysine. Positions 133–143 (ERGKSSGRSDD) are LID. Residue Arg-134 participates in ATP binding. Residues Arg-140 and Arg-151 each coordinate a ribonucleoside 5'-phosphate. Lys-179 is an ATP binding site. Ser-180 is modified (phosphoserine).

The protein belongs to the adenylate kinase family. UMP-CMP kinase subfamily. As to quaternary structure, monomer. It depends on Mg(2+) as a cofactor. In terms of tissue distribution, ubiquitously expressed.

It localises to the nucleus. Its subcellular location is the cytoplasm. The catalysed reaction is CMP + ATP = CDP + ADP. It carries out the reaction dCMP + ATP = dCDP + ADP. The enzyme catalyses UMP + ATP = UDP + ADP. It catalyses the reaction a 2'-deoxyribonucleoside 5'-diphosphate + ATP = a 2'-deoxyribonucleoside 5'-triphosphate + ADP. The catalysed reaction is a ribonucleoside 5'-diphosphate + ATP = a ribonucleoside 5'-triphosphate + ADP. Catalyzes the phosphorylation of pyrimidine nucleoside monophosphates at the expense of ATP. Plays an important role in de novo pyrimidine nucleotide biosynthesis. Has preference for UMP and CMP as phosphate acceptors. Also displays broad nucleoside diphosphate kinase activity. The sequence is that of UMP-CMP kinase from Homo sapiens (Human).